Here is a 605-residue protein sequence, read N- to C-terminus: Elongation factor 4 (605 aa).

Residues K11 to R193 enclose the tr-type G domain. Residues D23 to T28 and N140 to D143 contribute to the GTP site.

The protein belongs to the TRAFAC class translation factor GTPase superfamily. Classic translation factor GTPase family. LepA subfamily.

The protein resides in the cell membrane. It carries out the reaction GTP + H2O = GDP + phosphate + H(+). In terms of biological role, required for accurate and efficient protein synthesis under certain stress conditions. May act as a fidelity factor of the translation reaction, by catalyzing a one-codon backward translocation of tRNAs on improperly translocated ribosomes. Back-translocation proceeds from a post-translocation (POST) complex to a pre-translocation (PRE) complex, thus giving elongation factor G a second chance to translocate the tRNAs correctly. Binds to ribosomes in a GTP-dependent manner. In Phytoplasma mali (strain AT), this protein is Elongation factor 4.